The primary structure comprises 346 residues: tRNA N6-adenosine threonylcarbamoyltransferase (346 aa).

2 residues coordinate Fe cation: H111 and H115. Residues 134–138 (LVSGG), D167, G180, and N279 contribute to the substrate site. D307 is a Fe cation binding site.

Belongs to the KAE1 / TsaD family. The cofactor is Fe(2+).

It is found in the cytoplasm. It carries out the reaction L-threonylcarbamoyladenylate + adenosine(37) in tRNA = N(6)-L-threonylcarbamoyladenosine(37) in tRNA + AMP + H(+). Its function is as follows. Required for the formation of a threonylcarbamoyl group on adenosine at position 37 (t(6)A37) in tRNAs that read codons beginning with adenine. Is involved in the transfer of the threonylcarbamoyl moiety of threonylcarbamoyl-AMP (TC-AMP) to the N6 group of A37, together with TsaE and TsaB. TsaD likely plays a direct catalytic role in this reaction. The protein is tRNA N6-adenosine threonylcarbamoyltransferase of Burkholderia lata (strain ATCC 17760 / DSM 23089 / LMG 22485 / NCIMB 9086 / R18194 / 383).